The chain runs to 259 residues: Transcription factor bHLH80 (259 aa).

Positions 1 to 25 (MQSTHISGGSSGGGGGGGGEVSRSG) are disordered. Over residues 9-20 (GSSGGGGGGGGE) the composition is skewed to gly residues. The region spanning 187–237 (CATHPRSIAERVRRTRISDRIRRLQELVPNMDKQTNTADMLEEAVEYVKAL) is the bHLH domain.

Homodimer. In terms of tissue distribution, expressed constitutively in roots, leaves, stems, and flowers.

It localises to the nucleus. This chain is Transcription factor bHLH80 (BHLH80), found in Arabidopsis thaliana (Mouse-ear cress).